A 338-amino-acid chain; its full sequence is Anthranilate phosphoribosyltransferase (338 aa).

5-phospho-alpha-D-ribose 1-diphosphate is bound by residues Gly81, 84-85 (GD), Thr89, 91-94 (NIST), 109-117 (KHGNRNLSS), and Ala121. Gly81 contacts anthranilate. Residue Ser93 participates in Mg(2+) binding. Asn112 contacts anthranilate. Anthranilate is bound at residue Arg167. Mg(2+)-binding residues include Asp226 and Glu227.

This sequence belongs to the anthranilate phosphoribosyltransferase family. In terms of assembly, homodimer. The cofactor is Mg(2+).

It catalyses the reaction N-(5-phospho-beta-D-ribosyl)anthranilate + diphosphate = 5-phospho-alpha-D-ribose 1-diphosphate + anthranilate. The protein operates within amino-acid biosynthesis; L-tryptophan biosynthesis; L-tryptophan from chorismate: step 2/5. In terms of biological role, catalyzes the transfer of the phosphoribosyl group of 5-phosphorylribose-1-pyrophosphate (PRPP) to anthranilate to yield N-(5'-phosphoribosyl)-anthranilate (PRA). In Cereibacter sphaeroides (strain ATCC 17025 / ATH 2.4.3) (Rhodobacter sphaeroides), this protein is Anthranilate phosphoribosyltransferase.